The sequence spans 638 residues: Chaperone protein DnaK (638 aa).

Thr197 is subject to Phosphothreonine; by autocatalysis. Residues 600 to 638 (SGAQGGAQAGPGAGAGQQANQGSSNNKEDIQDADFEEVK) are disordered. Residues 602–614 (AQGGAQAGPGAGA) are compositionally biased toward gly residues. Residues 615–624 (GQQANQGSSN) show a composition bias toward low complexity. A compositionally biased stretch (basic and acidic residues) spans 625 to 638 (NKEDIQDADFEEVK).

This sequence belongs to the heat shock protein 70 family.

Its function is as follows. Acts as a chaperone. This is Chaperone protein DnaK from Phocaeicola vulgatus (strain ATCC 8482 / DSM 1447 / JCM 5826 / CCUG 4940 / NBRC 14291 / NCTC 11154) (Bacteroides vulgatus).